The primary structure comprises 185 residues: Ribosome-recycling factor (185 aa).

Belongs to the RRF family.

The protein localises to the cytoplasm. Functionally, responsible for the release of ribosomes from messenger RNA at the termination of protein biosynthesis. May increase the efficiency of translation by recycling ribosomes from one round of translation to another. This Shewanella piezotolerans (strain WP3 / JCM 13877) protein is Ribosome-recycling factor.